A 303-amino-acid polypeptide reads, in one-letter code: Catechol 1,2-dioxygenase (303 aa).

The Fe cation site is built by Tyr156, Tyr191, His215, and His217.

In terms of assembly, homodimer. Requires Fe(3+) as cofactor.

It catalyses the reaction catechol + O2 = cis,cis-muconate + 2 H(+). The protein operates within aromatic compound metabolism; beta-ketoadipate pathway; 5-oxo-4,5-dihydro-2-furylacetate from catechol: step 1/3. Its activity is regulated as follows. Inhibited by Ag(+), Cu(+), Hg(2+) and Pb(2+). In terms of biological role, can cleave 4-methylcatechol at lower rates than catechol, but has no activity with 3-methylcatechol, 4-chlorocatechol, 4-carboxycatechol or hydroxyquinol. The chain is Catechol 1,2-dioxygenase (HQD2) from Candida albicans (strain SC5314 / ATCC MYA-2876) (Yeast).